We begin with the raw amino-acid sequence, 366 residues long: Beta sliding clamp (366 aa).

It belongs to the beta sliding clamp family. Forms a ring-shaped head-to-tail homodimer around DNA which binds and tethers DNA polymerases and other proteins to the DNA. The DNA replisome complex has a single clamp-loading complex (3 tau and 1 each of delta, delta', psi and chi subunits) which binds 3 Pol III cores (1 core on the leading strand and 2 on the lagging strand) each with a beta sliding clamp dimer. Additional proteins in the replisome are other copies of gamma, psi and chi, Ssb, DNA helicase and RNA primase.

The protein localises to the cytoplasm. Its function is as follows. Confers DNA tethering and processivity to DNA polymerases and other proteins. Acts as a clamp, forming a ring around DNA (a reaction catalyzed by the clamp-loading complex) which diffuses in an ATP-independent manner freely and bidirectionally along dsDNA. Initially characterized for its ability to contact the catalytic subunit of DNA polymerase III (Pol III), a complex, multichain enzyme responsible for most of the replicative synthesis in bacteria; Pol III exhibits 3'-5' exonuclease proofreading activity. The beta chain is required for initiation of replication as well as for processivity of DNA replication. The sequence is that of Beta sliding clamp (dnaN) from Haemophilus influenzae (strain ATCC 51907 / DSM 11121 / KW20 / Rd).